Reading from the N-terminus, the 44-residue chain is Alpha-amylase inhibitor WDAI-3 (44 aa).

Cys-20 and Cys-41 are oxidised to a cystine.

It belongs to the protease inhibitor I6 (cereal trypsin/alpha-amylase inhibitor) family. As to quaternary structure, homodimer. Post-translationally, the disulfide bonds are essential for the inhibitor activity. In terms of tissue distribution, endosperm.

It is found in the secreted. Its function is as follows. Alpha-amylase inhibitor. This chain is Alpha-amylase inhibitor WDAI-3 (IHA-B1-2), found in Triticum aestivum (Wheat).